The following is a 394-amino-acid chain: Flavohemoprotein (394 aa).

Residues 1 to 136 (MLSENTINIV…LANVFIQREE (136 aa)) enclose the Globin domain. Position 85 (His-85) interacts with heme b. Catalysis depends on charge relay system residues Tyr-95 and Glu-135. Residues 147-394 (GGWRGLREFE…YECFGPHKVV (248 aa)) form a reductase region. The FAD-binding FR-type domain maps to 150 to 255 (RGLREFELVE…AAPAGDFFLD (106 aa)). FAD contacts are provided by residues Tyr-188 and 204–207 (RQYS). Residue 268–273 (GVGLTP) participates in NADP(+) binding. Residue 387-390 (CFGP) coordinates FAD.

It belongs to the globin family. Two-domain flavohemoproteins subfamily. This sequence in the C-terminal section; belongs to the flavoprotein pyridine nucleotide cytochrome reductase family. Heme b serves as cofactor. The cofactor is FAD.

The catalysed reaction is 2 nitric oxide + NADPH + 2 O2 = 2 nitrate + NADP(+) + H(+). It catalyses the reaction 2 nitric oxide + NADH + 2 O2 = 2 nitrate + NAD(+) + H(+). In terms of biological role, is involved in NO detoxification in an aerobic process, termed nitric oxide dioxygenase (NOD) reaction that utilizes O(2) and NAD(P)H to convert NO to nitrate, which protects the bacterium from various noxious nitrogen compounds. Therefore, plays a central role in the inducible response to nitrosative stress. The sequence is that of Flavohemoprotein from Vibrio vulnificus (strain CMCP6).